The primary structure comprises 154 residues: Cyanate hydratase (154 aa).

Catalysis depends on residues R100, E103, and S126.

The protein belongs to the cyanase family.

It catalyses the reaction cyanate + hydrogencarbonate + 3 H(+) = NH4(+) + 2 CO2. Its function is as follows. Catalyzes the reaction of cyanate with bicarbonate to produce ammonia and carbon dioxide. The chain is Cyanate hydratase from Aspergillus fumigatus (strain CBS 144.89 / FGSC A1163 / CEA10) (Neosartorya fumigata).